A 226-amino-acid polypeptide reads, in one-letter code: RNA annealing protein YRA1 (226 aa).

The disordered stretch occupies residues 1–62 (MSANLDKSLD…PIRKNTRAPP (62 aa)). At serine 2 the chain carries N-acetylserine. 2 positions are modified to phosphoserine: serine 8 and serine 100. An RRM domain is found at 78–158 (VKVNVEGLPR…SRLRLNLIVD (81 aa)). The interval 173-226 (AMPQKGGNAPRPVKRGPNRKAAMAKSQNKPKREKPAKKSLEDLDKEMADYFEKK) is disordered. Residues 208–226 (AKKSLEDLDKEMADYFEKK) show a composition bias toward basic and acidic residues.

In terms of assembly, component of the transcription/export (TREX) complex, which is at least is formed of SUB2, TEX1 and YRA1 and the THO complex composed of HPR1, MFT1, THO2 and THP1. Interacts with RDS3 and YRA2.

It is found in the nucleus. RNA-binding RNA annealing protein. May have a role in pre-mRNA metabolism. Component the TREX complex, which operates in coupling transcription elongation to mRNA export. The polypeptide is RNA annealing protein YRA1 (YRA1) (Saccharomyces cerevisiae (strain ATCC 204508 / S288c) (Baker's yeast)).